Reading from the N-terminus, the 64-residue chain is Large ribosomal subunit protein bL33 (64 aa).

This sequence belongs to the bacterial ribosomal protein bL33 family.

This Synechococcus elongatus (strain ATCC 33912 / PCC 7942 / FACHB-805) (Anacystis nidulans R2) protein is Large ribosomal subunit protein bL33.